The following is a 449-amino-acid chain: Tubulin alpha chain (449 aa).

Gln-11 contributes to the GTP binding site. The residue at position 40 (Lys-40) is an N6-acetyllysine. Glu-71, Ser-140, Gly-144, Thr-145, Thr-179, Asn-206, and Asn-228 together coordinate GTP. Residue Glu-71 coordinates Mg(2+). Glu-254 is an active-site residue.

It belongs to the tubulin family. In terms of assembly, dimer of alpha and beta chains. A typical microtubule is a hollow water-filled tube with an outer diameter of 25 nm and an inner diameter of 15 nM. Alpha-beta heterodimers associate head-to-tail to form protofilaments running lengthwise along the microtubule wall with the beta-tubulin subunit facing the microtubule plus end conferring a structural polarity. Microtubules usually have 13 protofilaments but different protofilament numbers can be found in some organisms and specialized cells. The cofactor is Mg(2+). Post-translationally, undergoes a tyrosination/detyrosination cycle, the cyclic removal and re-addition of a C-terminal tyrosine residue by the enzymes tubulin tyrosine carboxypeptidase (TTCP) and tubulin tyrosine ligase (TTL), respectively. In terms of processing, some glutamate residues at the C-terminus are either polyglutamylated or polyglycylated. These 2 modifications occur exclusively on glutamate residues and result in either polyglutamate or polyglycine chains on the gamma-carboxyl group. Both modifications can coexist on the same protein on adjacent residues, and lowering polyglycylation levels increases polyglutamylation, and reciprocally. The precise function of such modifications is still unclear but they regulate the assembly and dynamics of axonemal microtubules. Acetylation of alpha chains at Lys-40 stabilizes microtubules and affects affinity and processivity of microtubule motors. This modification has a role in multiple cellular functions, ranging from cell motility, cell cycle progression or cell differentiation to intracellular trafficking and signaling.

It localises to the cytoplasm. The protein resides in the cytoskeleton. It catalyses the reaction GTP + H2O = GDP + phosphate + H(+). Functionally, tubulin is the major constituent of microtubules, a cylinder consisting of laterally associated linear protofilaments composed of alpha- and beta-tubulin heterodimers. Microtubules grow by the addition of GTP-tubulin dimers to the microtubule end, where a stabilizing cap forms. Below the cap, tubulin dimers are in GDP-bound state, owing to GTPase activity of alpha-tubulin. This Tetrahymena thermophila protein is Tubulin alpha chain.